The primary structure comprises 344 residues: Nuclear distribution protein nudE-like 1-B (344 aa).

A coiled-coil region spans residues lysine 13–glycine 190. Disordered regions lie at residues arginine 186–serine 209 and proline 325–valine 344. The span at proline 333–valine 344 shows a compositional bias: pro residues.

This sequence belongs to the nudE family. In terms of processing, phosphorylated in mitosis.

The protein localises to the cytoplasm. Its subcellular location is the cytoskeleton. It localises to the microtubule organizing center. The protein resides in the centrosome. It is found in the spindle. In terms of biological role, required for organization of the cellular microtubule array and microtubule anchoring at the centrosome. Positively regulates the activity of the minus-end directed microtubule motor protein dynein. May enhance dynein-mediated microtubule sliding by targeting dynein to the microtubule plus end. Positively regulates lysosome peripheral distribution and ruffled border formation in osteoclasts. This is Nuclear distribution protein nudE-like 1-B (ndel1-b) from Xenopus laevis (African clawed frog).